A 314-amino-acid chain; its full sequence is MKVAVLGAAGGIGQALALLLKLQLPAGTNLALYDIAPVTPGVAVDVSHIPTAVKVVGYAGEDPTPALEGANLVLISAGVARKPGMDRSDLFNINAGIVRNLIEKVATVCPTACVGIITNPVNTTVAIAAEVLKKAGVYDKRKLFGVTSLDVLRSETFVAELKGKDVNDVKVPVIGGHSGVTILPLLSQAFEEDKIDFTAEEVAALTKRIQNAGTEVVEAKAGGGSATLSMAQAAARFARSVLKGLTGEQVVEYAYVEGNGEYARFFAQPVRLGLNGVEELLPIGTLSAYEEEAVQAMIPTLKADIELGEKFVNG.

Residues 7-13 (GAAGGIG) and Asp34 contribute to the NAD(+) site. Substrate-binding residues include Arg81 and Arg87. NAD(+) is bound by residues Asn94 and 117 to 119 (ITN). Residues Asn119 and Arg153 each contribute to the substrate site. The active-site Proton acceptor is the His177. An NAD(+)-binding site is contributed by Met230.

It belongs to the LDH/MDH superfamily. MDH type 1 family. In terms of assembly, homodimer.

It carries out the reaction (S)-malate + NAD(+) = oxaloacetate + NADH + H(+). Its function is as follows. Catalyzes the reversible oxidation of malate to oxaloacetate. The chain is Malate dehydrogenase from Glaesserella parasuis serovar 5 (strain SH0165) (Haemophilus parasuis).